Here is a 111-residue protein sequence, read N- to C-terminus: Rho GDP-dissociation inhibitor 1 (111 aa).

Residues K57 and K60 each participate in a glycyl lysine isopeptide (Lys-Gly) (interchain with G-Cter in SUMO1); alternate cross-link. Residues K57 and K60 each participate in a glycyl lysine isopeptide (Lys-Gly) (interchain with G-Cter in SUMO2); alternate cross-link. At K60 the chain carries N6-acetyllysine; alternate. At K60 the chain carries N6-succinyllysine; alternate.

The protein belongs to the Rho GDI family. Monomer. Interacts with FER. Interacts with PLXNB3. Forms a heterodimer with RAC1. Interacts with RHOA, the affinity is increased by three orders of magnitude when RHOA is prenylated. Interacts with PSMD10; the interaction increases ARHGDIA association with RHOA, leading to ARHGDIA-mediated inactivation of RHOA and ROCK and prolonged AKT activation. Interacts with KANK2; the interaction is direct and may regulate the interaction of ARHGDIA with RHOA, RAC1 and CDC42. Interacts with RHOC. Interacts with CDC42. Interacts with NGFR (via death domain); NGFR binding decreases the affinity for RHOA. In terms of processing, the N-terminus is blocked.

It is found in the cytoplasm. Controls Rho proteins homeostasis. Regulates the GDP/GTP exchange reaction of the Rho proteins by inhibiting the dissociation of GDP from them, and the subsequent binding of GTP to them. Retains Rho proteins such as CDC42, RAC1 and RHOA in an inactive cytosolic pool, regulating their stability and protecting them from degradation. Actively involved in the recycling and distribution of activated Rho GTPases in the cell, mediates extraction from membranes of both inactive and activated molecules due its exceptionally high affinity for prenylated forms. Through the modulation of Rho proteins, may play a role in cell motility regulation. In glioma cells, inhibits cell migration and invasion by mediating the signals of SEMA5A and PLXNB3 that lead to inactivation of RAC1. This Cavia porcellus (Guinea pig) protein is Rho GDP-dissociation inhibitor 1 (ARHGDIA).